A 258-amino-acid polypeptide reads, in one-letter code: MKIAILYREEREKEGEFLKEKISKEHEVIEFGEANAPGRVTADLIVVVGGDGTVLKAAKKAADGTPMVGFKAGRLGFLTSYTLDEIDRFLEDLRNWNFREETRWFIQIESELGNHLALNDVTLERDLSGKMVEIEVEVEHHSSMWFFADGVVISTPTGSTAYSLSIGGPIIFPECEVLEISPIAPQFFLTRSVVIPSNFKVVVESQRDINMLVDGVLTGKTKRIEVKKSRRYVRILRPPEYDYVTVIRDKLGYGRRIE.

Asp-51 functions as the Proton acceptor in the catalytic mechanism. Residues 51 to 52, 119 to 120, Lys-130, Asp-149, 160 to 165, and Ala-184 each bind NAD(+); these read DG, ND, and TAYSLS.

Belongs to the NAD kinase family. Homodimer. It depends on a divalent metal cation as a cofactor.

The protein resides in the cytoplasm. The enzyme catalyses NAD(+) + ATP = ADP + NADP(+) + H(+). In terms of biological role, involved in the regulation of the intracellular balance between NAD(H) and NADP(H), and is a key enzyme in the biosynthesis of NADP. Catalyzes specifically the phosphorylation on 2'-hydroxyl of the adenosine moiety of NAD to yield NADP. The sequence is that of NAD kinase (NADK) from Thermotoga maritima (strain ATCC 43589 / DSM 3109 / JCM 10099 / NBRC 100826 / MSB8).